Here is a 104-residue protein sequence, read N- to C-terminus: MAAKIRRDDEVIVLTGKDKGKRGKVKNVLSSGKVIVEGINLVKKHQKPVPALNQPGGIVEKEAAIQVSNVAIFNAATGKADRVGFRFEDGKKVRFFKSNSETIK.

The protein belongs to the universal ribosomal protein uL24 family. As to quaternary structure, part of the 50S ribosomal subunit.

Functionally, one of two assembly initiator proteins, it binds directly to the 5'-end of the 23S rRNA, where it nucleates assembly of the 50S subunit. One of the proteins that surrounds the polypeptide exit tunnel on the outside of the subunit. This chain is Large ribosomal subunit protein uL24, found in Cronobacter sakazakii (strain ATCC BAA-894) (Enterobacter sakazakii).